Reading from the N-terminus, the 64-residue chain is Alpha-like toxin BmK M2 (64 aa).

In terms of domain architecture, LCN-type CS-alpha/beta spans 2-64; that stretch reads RDAYIAKPHN…VPIRVPGKCH (63 aa). 4 disulfide bridges follow: C12–C63, C16–C36, C22–C46, and C26–C48.

The protein belongs to the long (4 C-C) scorpion toxin superfamily. Sodium channel inhibitor family. Alpha subfamily. As to expression, expressed by the venom gland.

It localises to the secreted. Functionally, alpha toxins bind voltage-independently at site-3 of sodium channels (Nav) and inhibit the inactivation of the activated channels, thereby blocking neuronal transmission. This toxin is active against both mammals and insects, and is classified as an alpha-like toxin. The sequence is that of Alpha-like toxin BmK M2 from Olivierus martensii (Manchurian scorpion).